Here is a 97-residue protein sequence, read N- to C-terminus: Protein RESPONSE TO LOW SULFUR 3 (97 aa).

Residues 8 to 42 are a coiled coil; it reads VTVAAEEVEELRRRNGELEREMEEMKKEMVQLWRR.

The sequence is that of Protein RESPONSE TO LOW SULFUR 3 from Arabidopsis thaliana (Mouse-ear cress).